The chain runs to 147 residues: UPF0306 protein YpAngola_A4021 (147 aa).

The protein belongs to the UPF0306 family.

The chain is UPF0306 protein YpAngola_A4021 from Yersinia pestis bv. Antiqua (strain Angola).